The primary structure comprises 207 residues: Negative modulator of initiation of replication (207 aa).

Residues Ala43 to Ala54 show a composition bias toward polar residues. Positions Ala43 to Glu63 are disordered.

This sequence belongs to the SeqA family. As to quaternary structure, homodimer. Polymerizes to form helical filaments.

It is found in the cytoplasm. Functionally, negative regulator of replication initiation, which contributes to regulation of DNA replication and ensures that replication initiation occurs exactly once per chromosome per cell cycle. Binds to pairs of hemimethylated GATC sequences in the oriC region, thus preventing assembly of replication proteins and re-initiation at newly replicated origins. Repression is relieved when the region becomes fully methylated. The chain is Negative modulator of initiation of replication from Psychromonas ingrahamii (strain DSM 17664 / CCUG 51855 / 37).